Here is a 223-residue protein sequence, read N- to C-terminus: Translation initiation factor 6 (223 aa).

This sequence belongs to the eIF-6 family.

Its function is as follows. Binds to the 50S ribosomal subunit and prevents its association with the 30S ribosomal subunit to form the 70S initiation complex. This is Translation initiation factor 6 from Thermofilum pendens (strain DSM 2475 / Hrk 5).